Here is a 437-residue protein sequence, read N- to C-terminus: MSVITRIHARQIMDSRGNPTVEVDVHTESSFGRAAVPSGASTGVHEAVELRDKDKSVFLGKGVLKAVENVNTLINDALLGMDVTEQEAIDAKLIELDGTPNKSKLGANAILGVSLACAKAGAEYSALPLYRYIGGTTAKTLPVPMMNVLNGGAHADNTVDFQEFMIMPIGFERYSDALRCGAEVFHSLKSLLHDRGLSTAVGDEGGFAPNVESNEQAIELVIEAIGMAGYKAGAPTDRGGLGDGHVMIALDPASSEFYDAEKKKYVFKKSSGRELSSEEMASYWADWASRYPIISIEDGMAEDDWEGWKMLTDKIGGRVQLVGDDLFVTNSKRLAEGIEKGVGNSILIKVNQIGTLTETLQAIELAKRNGYTSVISHRSGETEDTTIAQIAVATNAGQIKTGSMSRSDRMAKYNELLRIEEELGSTALYPGIGAFRV.

Q162 contacts (2R)-2-phosphoglycerate. E204 acts as the Proton donor in catalysis. 3 residues coordinate Mg(2+): D251, E297, and D324. The (2R)-2-phosphoglycerate site is built by K349, R378, S379, and K400. K349 functions as the Proton acceptor in the catalytic mechanism.

The protein belongs to the enolase family. Mg(2+) is required as a cofactor.

The protein resides in the cytoplasm. It is found in the secreted. It localises to the cell surface. The catalysed reaction is (2R)-2-phosphoglycerate = phosphoenolpyruvate + H2O. The protein operates within carbohydrate degradation; glycolysis; pyruvate from D-glyceraldehyde 3-phosphate: step 4/5. Catalyzes the reversible conversion of 2-phosphoglycerate (2-PG) into phosphoenolpyruvate (PEP). It is essential for the degradation of carbohydrates via glycolysis. The polypeptide is Enolase 2 (Chlorobaculum tepidum (strain ATCC 49652 / DSM 12025 / NBRC 103806 / TLS) (Chlorobium tepidum)).